A 216-amino-acid polypeptide reads, in one-letter code: Probable GTP-binding protein EngB (216 aa).

The EngB-type G domain occupies 37 to 214 (DGLEVAFAGR…RAAMIRLLDE (178 aa)). GTP is bound by residues 45–52 (GRSNVGKS), 72–76 (GRTQE), 92–95 (DMPG), 159–162 (TKAD), and 193–195 (TSS). Residues Ser-52 and Thr-74 each contribute to the Mg(2+) site.

The protein belongs to the TRAFAC class TrmE-Era-EngA-EngB-Septin-like GTPase superfamily. EngB GTPase family. Mg(2+) is required as a cofactor.

Functionally, necessary for normal cell division and for the maintenance of normal septation. This chain is Probable GTP-binding protein EngB, found in Rhodopseudomonas palustris (strain HaA2).